Reading from the N-terminus, the 446-residue chain is Bifunctional protein GlmU (446 aa).

The interval Met-1–Arg-229 is pyrophosphorylase. UDP-N-acetyl-alpha-D-glucosamine-binding positions include Leu-11–Gly-14, Lys-25, Gln-78, Gly-83–Thr-84, Tyr-106–Asp-108, Gly-141, Glu-155, Asn-170, and Asn-227. Asp-108 lines the Mg(2+) pocket. Residue Asn-227 participates in Mg(2+) binding. The tract at residues Ala-230–Asp-250 is linker. Residues Gly-251–Asn-446 form an N-acetyltransferase region. Residues Arg-316 and Lys-334 each coordinate UDP-N-acetyl-alpha-D-glucosamine. The active-site Proton acceptor is His-346. UDP-N-acetyl-alpha-D-glucosamine is bound by residues Tyr-349 and Asn-360. Acetyl-CoA is bound by residues Ala-363, Asn-369 to Tyr-370, Ser-388, Ser-406, and Arg-423.

The protein in the N-terminal section; belongs to the N-acetylglucosamine-1-phosphate uridyltransferase family. In the C-terminal section; belongs to the transferase hexapeptide repeat family. Homotrimer. Requires Mg(2+) as cofactor.

It localises to the cytoplasm. It catalyses the reaction alpha-D-glucosamine 1-phosphate + acetyl-CoA = N-acetyl-alpha-D-glucosamine 1-phosphate + CoA + H(+). The catalysed reaction is N-acetyl-alpha-D-glucosamine 1-phosphate + UTP + H(+) = UDP-N-acetyl-alpha-D-glucosamine + diphosphate. Its pathway is nucleotide-sugar biosynthesis; UDP-N-acetyl-alpha-D-glucosamine biosynthesis; N-acetyl-alpha-D-glucosamine 1-phosphate from alpha-D-glucosamine 6-phosphate (route II): step 2/2. It functions in the pathway nucleotide-sugar biosynthesis; UDP-N-acetyl-alpha-D-glucosamine biosynthesis; UDP-N-acetyl-alpha-D-glucosamine from N-acetyl-alpha-D-glucosamine 1-phosphate: step 1/1. The protein operates within bacterial outer membrane biogenesis; LPS lipid A biosynthesis. Functionally, catalyzes the last two sequential reactions in the de novo biosynthetic pathway for UDP-N-acetylglucosamine (UDP-GlcNAc). The C-terminal domain catalyzes the transfer of acetyl group from acetyl coenzyme A to glucosamine-1-phosphate (GlcN-1-P) to produce N-acetylglucosamine-1-phosphate (GlcNAc-1-P), which is converted into UDP-GlcNAc by the transfer of uridine 5-monophosphate (from uridine 5-triphosphate), a reaction catalyzed by the N-terminal domain. In Paracoccus denitrificans (strain Pd 1222), this protein is Bifunctional protein GlmU.